The primary structure comprises 173 residues: Translation initiation factor IF-3 (173 aa).

This sequence belongs to the IF-3 family. In terms of assembly, monomer.

It is found in the cytoplasm. Its function is as follows. IF-3 binds to the 30S ribosomal subunit and shifts the equilibrium between 70S ribosomes and their 50S and 30S subunits in favor of the free subunits, thus enhancing the availability of 30S subunits on which protein synthesis initiation begins. In Phenylobacterium zucineum (strain HLK1), this protein is Translation initiation factor IF-3.